Consider the following 128-residue polypeptide: Protein Wnt-8 (128 aa).

The O-palmitoleoyl serine moiety is linked to residue Ser-1. Disulfide bonds link Cys-71-Cys-109 and Cys-87-Cys-102. N-linked (GlcNAc...) asparagine glycans are attached at residues Asn-74 and Asn-93.

It belongs to the Wnt family. Post-translationally, palmitoleoylation is required for efficient binding to frizzled receptors. Depalmitoleoylation leads to Wnt signaling pathway inhibition. In terms of processing, proteolytic processing by tiki1 and tiki2 promotes oxidation and formation of large disulfide-bond oligomers, leading to inactivation of wnt8.

It localises to the secreted. The protein localises to the extracellular space. The protein resides in the extracellular matrix. Ligand for members of the frizzled family of seven transmembrane receptors. Probable developmental protein. May be a signaling molecule which affects the development of discrete regions of tissues. Is likely to signal over only few cell diameters. In Thunnus thynnus (Atlantic bluefin tuna), this protein is Protein Wnt-8 (wnt8).